A 598-amino-acid chain; its full sequence is Aspartate--tRNA ligase (598 aa).

Residue E173 coordinates L-aspartate. The aspartate stretch occupies residues 197–200; sequence QLFK. R219 serves as a coordination point for L-aspartate. ATP-binding positions include 219–221 and Q228; that span reads RDE. H449 provides a ligand contact to L-aspartate. E483 is an ATP binding site. R490 contacts L-aspartate. 535–538 contributes to the ATP binding site; sequence GLDR.

It belongs to the class-II aminoacyl-tRNA synthetase family. Type 1 subfamily. As to quaternary structure, homodimer.

It localises to the cytoplasm. It catalyses the reaction tRNA(Asp) + L-aspartate + ATP = L-aspartyl-tRNA(Asp) + AMP + diphosphate. In terms of biological role, catalyzes the attachment of L-aspartate to tRNA(Asp) in a two-step reaction: L-aspartate is first activated by ATP to form Asp-AMP and then transferred to the acceptor end of tRNA(Asp). The sequence is that of Aspartate--tRNA ligase from Shewanella halifaxensis (strain HAW-EB4).